Consider the following 532-residue polypeptide: Invertase 1 (532 aa).

Positions 1–19 are cleaved as a signal peptide; it reads MLLQAFLFLLAGFAAKISA. Asn-23 carries N-linked (GlcNAc...) asparagine glycosylation. Substrate contacts are provided by residues 39–42 and Gln-60; that span reads WMND. Residue Asp-42 is part of the active site. Asn-64 carries an N-linked (GlcNAc...) asparagine glycan. 102–103 contacts substrate; the sequence is YS. 4 N-linked (GlcNAc...) asparagine glycosylation sites follow: Asn-111, Asn-112, Asn-118, and Asn-165. Substrate-binding positions include 170 to 171 and Glu-223; that span reads RD. Residue Asn-275 is glycosylated (N-linked (GlcNAc...) asparagine). Residue Trp-311 coordinates substrate. Asn-356, Asn-369, Asn-384, Asn-398, and Asn-512 each carry an N-linked (GlcNAc...) asparagine glycan.

The protein belongs to the glycosyl hydrolase 32 family. Post-translationally, isoform Secreted is glycosylated. Isoform Intracellular is not glycosylated.

It is found in the cytoplasm. It localises to the secreted. The catalysed reaction is Hydrolysis of terminal non-reducing beta-D-fructofuranoside residues in beta-D-fructofuranosides.. The protein is Invertase 1 (SUC1) of Saccharomyces cerevisiae (Baker's yeast).